Reading from the N-terminus, the 117-residue chain is Large ribosomal subunit protein uL18 (117 aa).

The protein belongs to the universal ribosomal protein uL18 family. Part of the 50S ribosomal subunit; part of the 5S rRNA/L5/L18/L25 subcomplex. Contacts the 5S and 23S rRNAs.

In terms of biological role, this is one of the proteins that bind and probably mediate the attachment of the 5S RNA into the large ribosomal subunit, where it forms part of the central protuberance. The polypeptide is Large ribosomal subunit protein uL18 (Vibrio campbellii (strain ATCC BAA-1116)).